Here is a 281-residue protein sequence, read N- to C-terminus: 4-deoxy-L-threo-5-hexosulose-uronate ketol-isomerase (281 aa).

4 residues coordinate Zn(2+): His-198, His-200, Glu-205, and His-248.

It belongs to the KduI family. Requires Zn(2+) as cofactor.

The catalysed reaction is 5-dehydro-4-deoxy-D-glucuronate = 3-deoxy-D-glycero-2,5-hexodiulosonate. It participates in glycan metabolism; pectin degradation; 2-dehydro-3-deoxy-D-gluconate from pectin: step 4/5. In terms of biological role, catalyzes the isomerization of 5-dehydro-4-deoxy-D-glucuronate to 3-deoxy-D-glycero-2,5-hexodiulosonate. This is 4-deoxy-L-threo-5-hexosulose-uronate ketol-isomerase from Levilactobacillus brevis (strain ATCC 367 / BCRC 12310 / CIP 105137 / JCM 1170 / LMG 11437 / NCIMB 947 / NCTC 947) (Lactobacillus brevis).